The chain runs to 413 residues: Aspartate aminotransferase, cytoplasmic (413 aa).

L-aspartate-binding residues include Gly-39 and Trp-141. Phosphoserine is present on Ser-149. Asn-195 contributes to the L-aspartate binding site. Lys-259 is subject to N6-(pyridoxal phosphate)lysine. Residue Arg-387 coordinates L-aspartate.

This sequence belongs to the class-I pyridoxal-phosphate-dependent aminotransferase family. As to quaternary structure, homodimer. Pyridoxal 5'-phosphate serves as cofactor.

The protein localises to the cytoplasm. It carries out the reaction L-aspartate + 2-oxoglutarate = oxaloacetate + L-glutamate. The enzyme catalyses L-cysteine + 2-oxoglutarate = 2-oxo-3-sulfanylpropanoate + L-glutamate. It catalyses the reaction (2S)-2-aminobutanoate + 2-oxoglutarate = 2-oxobutanoate + L-glutamate. The catalysed reaction is 3-sulfino-L-alanine + 2-oxoglutarate = 3-sulfinopyruvate + L-glutamate. Biosynthesis of L-glutamate from L-aspartate or L-cysteine. Important regulator of levels of glutamate, the major excitatory neurotransmitter of the vertebrate central nervous system. Acts as a scavenger of glutamate in brain neuroprotection. The aspartate aminotransferase activity is involved in hepatic glucose synthesis during development and in adipocyte glyceroneogenesis. Using L-cysteine as substrate, regulates levels of mercaptopyruvate, an important source of hydrogen sulfide. Mercaptopyruvate is converted into H(2)S via the action of 3-mercaptopyruvate sulfurtransferase (3MST). Hydrogen sulfide is an important synaptic modulator and neuroprotectant in the brain. In Pan troglodytes (Chimpanzee), this protein is Aspartate aminotransferase, cytoplasmic.